We begin with the raw amino-acid sequence, 204 residues long: Quinol oxidase subunit 3 (204 aa).

Helical transmembrane passes span 27-47, 66-86, 95-115, 118-138, 140-160, and 184-204; these read FWIF…TFFV, LVMI…IAVH, GVVI…GCEI, FVHY…SGFF, LLGT…GILI, and FLDV…LGGL.

This sequence belongs to the cytochrome c oxidase subunit 3 family.

The protein localises to the cell membrane. It carries out the reaction 2 a quinol + O2 = 2 a quinone + 2 H2O. Its function is as follows. Catalyzes quinol oxidation with the concomitant reduction of oxygen to water. Major component for energy conversion during vegetative growth. The sequence is that of Quinol oxidase subunit 3 (qoxC) from Bacillus subtilis (strain 168).